The following is a 418-amino-acid chain: Putative ion-transport protein YfeO (418 aa).

The next 12 helical transmembrane spans lie at 10–30 (LLLS…LIVV), 54–74 (DSPF…GLVI), 99–119 (ALPG…SLGP), 120–140 (EHPI…RLLP), 149–169 (ILAS…AALI), 186–206 (LFAP…FFHP), 223–243 (ILSG…AVWC), 258–278 (VLML…AGPV), 300–320 (DYFL…ASGF), 322–342 (GGRI…LHEH), 343–363 (VPAV…VLVV), and 371–391 (LFMA…CIVM).

It belongs to the chloride channel (TC 2.A.49) family.

Its subcellular location is the cell membrane. This Escherichia coli (strain SMS-3-5 / SECEC) protein is Putative ion-transport protein YfeO.